The sequence spans 301 residues: Cilia- and flagella-associated protein 161 (301 aa).

It is found in the cytoplasm. Its subcellular location is the cytoskeleton. It localises to the cilium axoneme. In terms of biological role, microtubule inner protein (MIP) part of the dynein-decorated doublet microtubules (DMTs) in cilia axoneme, which is required for motile cilia beating. In Danio rerio (Zebrafish), this protein is Cilia- and flagella-associated protein 161.